The following is a 457-amino-acid chain: Multidrug resistance protein MdtK (457 aa).

The next 12 membrane-spanning stretches (helical) occupy residues 11–31, 53–73, 93–113, 127–147, 159–179, 190–210, 249–269, 276–296, 313–333, 357–377, 387–407, and 417–437; these read LSAL…MGVV, IWLP…PVVA, FLAA…EYAI, AIGY…YQVL, PGMM…YIFI, GVGC…LMML, LLFE…LGVV, IALN…VATT, IAAH…AIFT, LMLL…GTGV, IFYI…YLLA, and GPAG…VMMV.

It belongs to the multi antimicrobial extrusion (MATE) (TC 2.A.66.1) family. MdtK subfamily.

It is found in the cell inner membrane. In terms of biological role, multidrug efflux pump that functions probably as a Na(+)/drug antiporter. This Pectobacterium atrosepticum (strain SCRI 1043 / ATCC BAA-672) (Erwinia carotovora subsp. atroseptica) protein is Multidrug resistance protein MdtK.